A 537-amino-acid polypeptide reads, in one-letter code: Tyrosine-protein kinase Fyn (537 aa).

A lipid anchor (N-myristoyl glycine) is attached at glycine 2. S-palmitoyl cysteine attachment occurs at residues cysteine 3 and cysteine 6. A Phosphothreonine; by PKC modification is found at threonine 12. The SH3 domain maps to 82–143 (TGVTLFVALY…PSNYVAPVDS (62 aa)). Positions 149–246 (WYFGKLGRKD…GLCCRLVVPC (98 aa)) constitute an SH2 domain. A Protein kinase domain is found at 271 to 524 (LQLIKRLGNG…YLQGFLEDYF (254 aa)). ATP-binding positions include 277–285 (LGNGQFGEV) and lysine 299. Aspartate 390 acts as the Proton acceptor in catalysis. The residue at position 420 (tyrosine 420) is a Phosphotyrosine; by autocatalysis. Tyrosine 531 carries the post-translational modification Phosphotyrosine.

This sequence belongs to the protein kinase superfamily. Tyr protein kinase family. SRC subfamily. As to quaternary structure, associates through its SH3 domain, to the p85 subunit of phosphatidylinositol 3-kinase. Requires Mn(2+) as cofactor.

It catalyses the reaction L-tyrosyl-[protein] + ATP = O-phospho-L-tyrosyl-[protein] + ADP + H(+). With respect to regulation, inhibited by phosphorylation of Tyr-531 by leukocyte common antigen and activated by dephosphorylation of this site. Its function is as follows. Tyrosine-protein kinase implicated in the control of cell growth. Plays a role in the regulation of intracellular calcium levels. Required in brain development and mature brain function with important roles in the regulation of axon growth, axon guidance, and neurite extension. Blocks axon outgrowth and attraction induced by ntn1 by phosphorylating its receptor ddc. This Xenopus laevis (African clawed frog) protein is Tyrosine-protein kinase Fyn (fyn).